The chain runs to 129 residues: Large ribosomal subunit protein bL12 (129 aa).

The protein belongs to the bacterial ribosomal protein bL12 family. In terms of assembly, homodimer. Part of the ribosomal stalk of the 50S ribosomal subunit. Forms a multimeric L10(L12)X complex, where L10 forms an elongated spine to which 2 to 4 L12 dimers bind in a sequential fashion. Binds GTP-bound translation factors.

Forms part of the ribosomal stalk which helps the ribosome interact with GTP-bound translation factors. Is thus essential for accurate translation. The protein is Large ribosomal subunit protein bL12 of Photobacterium profundum (strain SS9).